We begin with the raw amino-acid sequence, 402 residues long: Acetate kinase (402 aa).

Residue Asn7 participates in Mg(2+) binding. Residue Lys14 coordinates ATP. Residue Arg95 participates in substrate binding. Catalysis depends on Asp152, which acts as the Proton donor/acceptor. Residues 212–216 (HLGNG), 286–288 (DMR), and 334–338 (GIGEN) each bind ATP. Glu388 is a binding site for Mg(2+).

Belongs to the acetokinase family. In terms of assembly, homodimer. Mg(2+) is required as a cofactor. Requires Mn(2+) as cofactor.

The protein localises to the cytoplasm. The enzyme catalyses acetate + ATP = acetyl phosphate + ADP. Its pathway is metabolic intermediate biosynthesis; acetyl-CoA biosynthesis; acetyl-CoA from acetate: step 1/2. Functionally, catalyzes the formation of acetyl phosphate from acetate and ATP. Can also catalyze the reverse reaction. The chain is Acetate kinase from Nitratidesulfovibrio vulgaris (strain DP4) (Desulfovibrio vulgaris).